The sequence spans 121 residues: Cytochrome c2 iso-2 (121 aa).

Heme c-binding residues include cysteine 15, cysteine 18, histidine 19, and methionine 98.

It belongs to the cytochrome c family. Post-translationally, binds 1 heme c group covalently per subunit.

Functionally, cytochrome c2 is found mainly in purple, non-sulfur, photosynthetic bacteria where it functions as the electron donor to the oxidized bacteriochlorophyll in the photophosphorylation pathway. However, it may also have a role in the respiratory chain and is found in some non-photosynthetic bacteria. The polypeptide is Cytochrome c2 iso-2 (Rhodospirillum centenum (Rhodocista centenaria)).